The following is a 434-amino-acid chain: Elongation factor 1-alpha (434 aa).

The region spanning 5–232 (KPHINLVVIG…DNVHPPKRPV (228 aa)) is the tr-type G domain. A G1 region spans residues 14 to 21 (GHVVAGKS). 14–21 (GHVVAGKS) lines the GTP pocket. The tract at residues 70-74 (GITID) is G2. The interval 91–94 (DAPG) is G3. GTP contacts are provided by residues 91-95 (DAPGH) and 153-156 (NKMD). Residues 153–156 (NKMD) form a G4 region. The interval 196–198 (SGF) is G5.

This sequence belongs to the TRAFAC class translation factor GTPase superfamily. Classic translation factor GTPase family. EF-Tu/EF-1A subfamily.

It is found in the cytoplasm. Functionally, this protein promotes the GTP-dependent binding of aminoacyl-tRNA to the A-site of ribosomes during protein biosynthesis. The chain is Elongation factor 1-alpha from Blastocystis hominis.